We begin with the raw amino-acid sequence, 207 residues long: Large ribosomal subunit protein uL4 (207 aa).

The tract at residues 43–80 is disordered; it reads RRRSGTAKSKGRSEVSGSTRKLYRQKGTGNARSGSVKS. The segment covering 69-78 has biased composition (polar residues); that stretch reads GTGNARSGSV.

The protein belongs to the universal ribosomal protein uL4 family. In terms of assembly, part of the 50S ribosomal subunit.

Its function is as follows. One of the primary rRNA binding proteins, this protein initially binds near the 5'-end of the 23S rRNA. It is important during the early stages of 50S assembly. It makes multiple contacts with different domains of the 23S rRNA in the assembled 50S subunit and ribosome. Forms part of the polypeptide exit tunnel. The sequence is that of Large ribosomal subunit protein uL4 from Desulforapulum autotrophicum (strain ATCC 43914 / DSM 3382 / VKM B-1955 / HRM2) (Desulfobacterium autotrophicum).